A 257-amino-acid chain; its full sequence is Imidazole glycerol phosphate synthase subunit HisF (257 aa).

Residues aspartate 11 and aspartate 130 contribute to the active site.

It belongs to the HisA/HisF family. As to quaternary structure, heterodimer of HisH and HisF.

The protein resides in the cytoplasm. The catalysed reaction is 5-[(5-phospho-1-deoxy-D-ribulos-1-ylimino)methylamino]-1-(5-phospho-beta-D-ribosyl)imidazole-4-carboxamide + L-glutamine = D-erythro-1-(imidazol-4-yl)glycerol 3-phosphate + 5-amino-1-(5-phospho-beta-D-ribosyl)imidazole-4-carboxamide + L-glutamate + H(+). The protein operates within amino-acid biosynthesis; L-histidine biosynthesis; L-histidine from 5-phospho-alpha-D-ribose 1-diphosphate: step 5/9. IGPS catalyzes the conversion of PRFAR and glutamine to IGP, AICAR and glutamate. The HisF subunit catalyzes the cyclization activity that produces IGP and AICAR from PRFAR using the ammonia provided by the HisH subunit. The chain is Imidazole glycerol phosphate synthase subunit HisF from Afipia carboxidovorans (strain ATCC 49405 / DSM 1227 / KCTC 32145 / OM5) (Oligotropha carboxidovorans).